The primary structure comprises 356 residues: Glutamate 5-kinase (356 aa).

K6 lines the ATP pocket. Substrate-binding residues include S46, D135, and N147. 202–208 (TGGMRSK) provides a ligand contact to ATP. Residues 265–342 (KGIIVVDRGA…SEVRKLLNTT (78 aa)) form the PUA domain.

This sequence belongs to the glutamate 5-kinase family.

It localises to the cytoplasm. It catalyses the reaction L-glutamate + ATP = L-glutamyl 5-phosphate + ADP. It participates in amino-acid biosynthesis; L-proline biosynthesis; L-glutamate 5-semialdehyde from L-glutamate: step 1/2. Functionally, catalyzes the transfer of a phosphate group to glutamate to form L-glutamate 5-phosphate. The sequence is that of Glutamate 5-kinase from Aquifex aeolicus (strain VF5).